The chain runs to 1356 residues: Tenascin-R (1356 aa).

Positions 1–31 are cleaved as a signal peptide; the sequence is MGIEGETVVLKNMLIGVNLILLGSMLKPSEC. Asn55 carries an N-linked (GlcNAc...) asparagine glycan. Residues 127-157 are a coiled coil; that stretch reads CASSAQVLQELLSRIEMLEREVSVLRDQCNT. A glycan (O-linked (Xyl...) (chondroitin sulfate) serine) is linked at Ser176. 2 N-linked (GlcNAc...) asparagine glycosylation sites follow: Asn180 and Asn198. EGF-like domains are found at residues 188–199, 204–230, and 235–261; these read CICNEGWFGKNC, CPLG…GDDC, and CPTD…GEDC. O-linked (Xyl...) (chondroitin sulfate) serine glycosylation occurs at Ser271. Asn278 carries an N-linked (GlcNAc...) asparagine glycan. 2 EGF-like domains span residues 281–292 and 293–324; these read CLCQEGYAGEDC and SQRR…PDCS. 2 disulfides stabilise this stretch: Cys297–Cys307 and Cys314–Cys323. O-linked (Xyl...) (chondroitin sulfate) serine glycosylation is present at Ser302. Fibronectin type-III domains follow at residues 328–419, 420–504, 505–596, 597–686, 687–776, 777–864, 865–953, 954–1040, and 1041–1129; these read PPED…TPQG, LQFK…TVID, GPTQ…IDAP, KNLR…TELD, SPRD…FRPI, SHLH…TGID, PPKN…AMDS, PMDL…TLLD, and PPAN…GGRV. N-linked (GlcNAc...) asparagine glycans are attached at residues Asn391, Asn469, and Asn580. Ser723 carries the post-translational modification Phosphoserine. Residues Asn790, Asn868, Asn873, Asn1034, Asn1044, and Asn1259 are each glycosylated (N-linked (GlcNAc...) asparagine). Positions 1127–1342 constitute a Fibrinogen C-terminal domain; that stretch reads GRVFSHPQDC…FVEMKMRPYI (216 aa).

The protein belongs to the tenascin family. In terms of assembly, forms oligomers. Interacts with TNC and FN1. Interacts with BCAN and ACAN in a calcium -dependent manner. Interacts with CNTN1, SCN2B, PTPRZ1, and CSPG3. Contains N-linked oligosaccharides, O-linked sialylated structures. Contains O-linked chondroitin sulfate glycosaminoglycans. Contains N-linked oligosaccharides with a sulfated carbohydrate structure type GalNAc-4-SO4 or HNK-1 (SO4-3-GlcUABeta1,3GalBeta1,4GlcNAc). The levels of HNK-1 rise and fall in parallel to those of TNR during postnatal development of the cerebellum. In contrast, levels of GalNAc-4-SO4 are regulated independently from those of TNR, rising late in cerebellar development and continuing into adulthood. Early in postnatal development, GalNAc-4-SO4 is found predominantly on isoform 1, whereas in the adult it is predominantly on isoform 2. In terms of tissue distribution, brain-specific. Expressed in oligodendrocytes and small subsets of neurons (mainly interneurons and motoneurons) of the cerebellum, hippocampus and olfactory bulb. Expressed in dorsal root ganglia.

Its subcellular location is the secreted. The protein resides in the extracellular space. It is found in the extracellular matrix. Its function is as follows. Neural extracellular matrix (ECM) protein involved in interactions with different cells and matrix components. Theses interactions can influence cellular behavior by either evoking a stable adhesion and differentiation, or repulsion and inhibition of neurite growth. Binding to cell surface gangliosides inhibits RGD-dependent integrin-mediated cell adhesion and results in an inhibition of PTK2/FAK1 (FAK) phosphorylation and cell detachment. Binding to membrane surface sulfatides results in a oligodendrocyte adhesion and differentiation. Interaction with CNTN1 induces a repulsion of neurons and an inhibition of neurite outgrowth. Interacts with SCN2B may play a crucial role in clustering and regulation of activity of sodium channels at nodes of Ranvier. TNR-linked chondroitin sulfate glycosaminoglycans are involved in the interaction with FN1 and mediates inhibition of cell adhesion and neurite outgrowth. The highly regulated addition of sulfated carbohydrate structure may modulate the adhesive properties of TNR over the course of development and during synapse maintenance. The polypeptide is Tenascin-R (Tnr) (Rattus norvegicus (Rat)).